We begin with the raw amino-acid sequence, 160 residues long: Cytochrome b6-f complex subunit 4 (160 aa).

The next 3 membrane-spanning stretches (helical) occupy residues 36 to 56, 95 to 115, and 128 to 148; these read LLYI…GLSV, LLGI…PFIE, and IAMA…IGAA.

This sequence belongs to the cytochrome b family. PetD subfamily. In terms of assembly, the 4 large subunits of the cytochrome b6-f complex are cytochrome b6, subunit IV (17 kDa polypeptide, PetD), cytochrome f and the Rieske protein, while the 4 small subunits are PetG, PetL, PetM and PetN. The complex functions as a dimer.

It is found in the cellular thylakoid membrane. Functionally, component of the cytochrome b6-f complex, which mediates electron transfer between photosystem II (PSII) and photosystem I (PSI), cyclic electron flow around PSI, and state transitions. In Synechococcus sp. (strain CC9311), this protein is Cytochrome b6-f complex subunit 4.